The following is a 177-amino-acid chain: 3-hydroxyanthranilate 3,4-dioxygenase (177 aa).

R47 is an O2 binding site. The Fe cation site is built by H51, E57, and H95. E57 is a substrate binding site. Substrate is bound by residues R99 and E110. Fe cation is bound by residues C125, C128, C162, and C165.

Belongs to the 3-HAO family. In terms of assembly, homodimer. It depends on Fe(2+) as a cofactor.

It catalyses the reaction 3-hydroxyanthranilate + O2 = (2Z,4Z)-2-amino-3-carboxymuconate 6-semialdehyde. Its pathway is cofactor biosynthesis; NAD(+) biosynthesis; quinolinate from L-kynurenine: step 3/3. Functionally, catalyzes the oxidative ring opening of 3-hydroxyanthranilate to 2-amino-3-carboxymuconate semialdehyde, which spontaneously cyclizes to quinolinate. The protein is 3-hydroxyanthranilate 3,4-dioxygenase of Burkholderia cenocepacia (strain ATCC BAA-245 / DSM 16553 / LMG 16656 / NCTC 13227 / J2315 / CF5610) (Burkholderia cepacia (strain J2315)).